The primary structure comprises 230 residues: MADLKVGSTTGGSVIWHQGNFPLNPAGDDVLYKSFKIYSEYNKPQATDNDFVSKANGGTKSQGFQKEVEFREGVKISATFSGGSDLNGLYSGNGDGASREKANMDLRSWYGIGIWNTCTGDGSGTHNSGLMPGVVHVETCWRLLFQTDNVISNASGPTGPAHLTRKDYVDGAINTVTANANSRVLRSGDTMTGNLTAPNFFSQNPASQPSHVPRFDQIVIKDSVQDFGYY.

In terms of assembly, the distal half-fiber contains two molecules each of Gp36 and Gp37 and one molecule of Gp35.

The protein resides in the virion. In terms of biological role, structural component of the distal-half tail fiber. The protein is Tail fiber protein p36 (36) of Enterobacteria phage K3 (Bacteriophage K3).